Consider the following 336-residue polypeptide: Formimidoylglutamase (336 aa).

The span at 1–10 shows a compositional bias: polar residues; sequence MNPNFTTEHT. A disordered region spans residues 1-22; the sequence is MNPNFTTEHTWQGRHDPEDGQA. Over residues 11–22 the composition is skewed to basic and acidic residues; the sequence is WQGRHDPEDGQA. Positions 127, 157, 159, 161, 254, and 256 each coordinate Mn(2+).

Belongs to the arginase family. Requires Mn(2+) as cofactor.

It catalyses the reaction N-formimidoyl-L-glutamate + H2O = formamide + L-glutamate. It participates in amino-acid degradation; L-histidine degradation into L-glutamate; L-glutamate from N-formimidoyl-L-glutamate (hydrolase route): step 1/1. Catalyzes the conversion of N-formimidoyl-L-glutamate to L-glutamate and formamide. This Vibrio cholerae serotype O1 (strain ATCC 39541 / Classical Ogawa 395 / O395) protein is Formimidoylglutamase.